Reading from the N-terminus, the 194-residue chain is NADH-quinone oxidoreductase subunit B 1 (194 aa).

Polar residues predominate over residues 1 to 12 (MGVTPVSNQPLV). The tract at residues 1-23 (MGVTPVSNQPLVAQQPKGIIDPS) is disordered. [4Fe-4S] cluster is bound by residues cysteine 73, cysteine 74, cysteine 138, and cysteine 168.

It belongs to the complex I 20 kDa subunit family. NDH-1 is composed of 14 different subunits. Subunits NuoB, C, D, E, F, and G constitute the peripheral sector of the complex. Requires [4Fe-4S] cluster as cofactor.

Its subcellular location is the cell inner membrane. The enzyme catalyses a quinone + NADH + 5 H(+)(in) = a quinol + NAD(+) + 4 H(+)(out). Functionally, NDH-1 shuttles electrons from NADH, via FMN and iron-sulfur (Fe-S) centers, to quinones in the respiratory chain. The immediate electron acceptor for the enzyme in this species is believed to be ubiquinone. Couples the redox reaction to proton translocation (for every two electrons transferred, four hydrogen ions are translocated across the cytoplasmic membrane), and thus conserves the redox energy in a proton gradient. The sequence is that of NADH-quinone oxidoreductase subunit B 1 from Rhizobium etli (strain ATCC 51251 / DSM 11541 / JCM 21823 / NBRC 15573 / CFN 42).